The chain runs to 187 residues: MTISKLVLASGSPRRRELLAQMGYQFEVVVPNVEEKRAAAESPAQYVERLSRDKALAGAALVAAEAVVIGSDTIVVKDQQVLEKPRDFADAKRMLLKLSGSQHQVMTGVSVTCRGITHSVVVTTEVWFKTLSEQEIEAYWQSGEPCDKAGSYGIQGLGGRFVTRIEGSYHAVVGLPLYETDQLLHKF.

D72 serves as the catalytic Proton acceptor.

It belongs to the Maf family. YhdE subfamily. A divalent metal cation is required as a cofactor.

Its subcellular location is the cytoplasm. It carries out the reaction dTTP + H2O = dTMP + diphosphate + H(+). The catalysed reaction is UTP + H2O = UMP + diphosphate + H(+). Functionally, nucleoside triphosphate pyrophosphatase that hydrolyzes dTTP and UTP. May have a dual role in cell division arrest and in preventing the incorporation of modified nucleotides into cellular nucleic acids. This Vibrio cholerae serotype O1 (strain ATCC 39315 / El Tor Inaba N16961) protein is dTTP/UTP pyrophosphatase.